A 440-amino-acid polypeptide reads, in one-letter code: Xaa-Pro dipeptidase (440 aa).

Mn(2+) is bound by residues aspartate 244, aspartate 255, histidine 336, glutamate 381, and glutamate 420.

It belongs to the peptidase M24B family. It depends on Mn(2+) as a cofactor. Post-translationally, the N-terminus is blocked.

The enzyme catalyses Xaa-L-Pro dipeptide + H2O = an L-alpha-amino acid + L-proline. The catalysed reaction is diisopropyl fluorophosphate + H2O = diisopropyl phosphate + fluoride + 2 H(+). Its function is as follows. Splits dipeptides with a prolyl or hydroxyprolyl residue in the C-terminal position and a nonpolar amino acid at the N-terminal position. Also catalyzes the hydrolysis of toxic organophosphorus cholinesterase-inhibiting compounds including nerve gases such as diisopropylfluorophosphate (DFP), O-isopropyl methylphosphonofluoridate (sarin), O-pinacolyl methylphosphonofluoridate (soman), and O-cyclohexyl methylphosphonofluoridate. This chain is Xaa-Pro dipeptidase (pepQ), found in Pseudoalteromonas haloplanktis (Alteromonas haloplanktis).